The primary structure comprises 326 residues: Acetyl-coenzyme A carboxylase carboxyl transferase subunit alpha (326 aa).

The region spanning 46-300 (EIEARAAELR…KEALLRHLDE (255 aa)) is the CoA carboxyltransferase C-terminal domain.

The protein belongs to the AccA family. As to quaternary structure, acetyl-CoA carboxylase is a heterohexamer composed of biotin carboxyl carrier protein (AccB), biotin carboxylase (AccC) and two subunits each of ACCase subunit alpha (AccA) and ACCase subunit beta (AccD).

Its subcellular location is the cytoplasm. The catalysed reaction is N(6)-carboxybiotinyl-L-lysyl-[protein] + acetyl-CoA = N(6)-biotinyl-L-lysyl-[protein] + malonyl-CoA. It functions in the pathway lipid metabolism; malonyl-CoA biosynthesis; malonyl-CoA from acetyl-CoA: step 1/1. Component of the acetyl coenzyme A carboxylase (ACC) complex. First, biotin carboxylase catalyzes the carboxylation of biotin on its carrier protein (BCCP) and then the CO(2) group is transferred by the carboxyltransferase to acetyl-CoA to form malonyl-CoA. In Gloeobacter violaceus (strain ATCC 29082 / PCC 7421), this protein is Acetyl-coenzyme A carboxylase carboxyl transferase subunit alpha.